A 321-amino-acid chain; its full sequence is Olfactory receptor 5P60 (321 aa).

At 1–28 (MAFLHNGNHTAVTEFILLGLTDDPVLRI) the chain is on the extracellular side. Residue N8 is glycosylated (N-linked (GlcNAc...) asparagine). A helical membrane pass occupies residues 29–49 (VLFTIILCIYLVTVSGNLSTI). Topologically, residues 50-57 (LLIRVSSQ) are cytoplasmic. A helical transmembrane segment spans residues 58–78 (LHHPMYFFLSHLASADIGYSS). Residues 79–102 (SVTPNMLVNFLVKQNTISYIGCSI) are Extracellular-facing. The cysteines at positions 100 and 192 are disulfide-linked. Residues 103-123 (QFGSAAFFGGLECFLLAVMAY) traverse the membrane as a helical segment. Topologically, residues 124 to 136 (DRFVAICNPLLYS) are cytoplasmic. A helical membrane pass occupies residues 137–157 (TKMSTQVCVQLVVGSYIGGFL). At 158-199 (NASFATVSFLFLFFCGPNIINHFFCDFAPLIELSCSDVRISV) the chain is on the extracellular side. The helical transmembrane segment at 200–220 (LVTSFSAGTVTMLTVLVIAIS) threads the bilayer. The Cytoplasmic portion of the chain corresponds to 221 to 240 (YTYILITILKMRSTEGRHKA). Residues 241–261 (FSTCTSHLTAVSLFYGTITFI) traverse the membrane as a helical segment. Residues 262–274 (YVMPKSRYSTDQN) are Extracellular-facing. Residues 275–295 (KVVSVFYMVVIPMLNPLIYSL) form a helical membrane-spanning segment. At 296-321 (RNNEIKGALRRHLGKKIFSQSNILFY) the chain is on the cytoplasmic side.

It belongs to the G-protein coupled receptor 1 family.

The protein resides in the cell membrane. Potential odorant receptor. This is Olfactory receptor 5P60 from Mus musculus (Mouse).